A 146-amino-acid polypeptide reads, in one-letter code: Large ribosomal subunit protein uL15 (146 aa).

The disordered stretch occupies residues 1-51 (MKLHELQPAPGSRKKAVRVGRGIGSGNGKTSGRGQKGQNARSGGGVRLGFE). 2 stretches are compositionally biased toward gly residues: residues 21–35 (RGIGSGNGKTSGRGQ) and 42–51 (SGGGVRLGFE).

Belongs to the universal ribosomal protein uL15 family. As to quaternary structure, part of the 50S ribosomal subunit.

In terms of biological role, binds to the 23S rRNA. This is Large ribosomal subunit protein uL15 from Geobacillus kaustophilus (strain HTA426).